The following is a 555-amino-acid chain: CCR4-NOT transcription complex subunit 6-like (555 aa).

The segment at 1-152 (MRLIGMPKEK…NLYQDPDGTR (152 aa)) is required for interaction with CNOT1, CNOT3 and CNOT7. 4 LRR repeats span residues 57 to 78 (HLTA…IAKL), 80 to 101 (NLVY…LGNM), 103 to 125 (SLRE…GRLF), and 126 to 148 (QLQT…YQDP). The segment at 158–555 (MLDNLAVHPE…VNGVHLPNRR (398 aa)) is nuclease domain. E240 lines the Mg(2+) pocket. Substrate is bound by residues E240, E276, H360, and P365. D410 serves as a coordination point for Mg(2+). The Proton donor/acceptor role is filled by D410. Residues N412, N479, and F484 each contribute to the substrate site.

This sequence belongs to the CCR4/nocturin family. As to quaternary structure, component of the CCR4-NOT complex; distinct complexes seem to exist that differ in the participation of probably mutually exclusive catalytic subunits; the complex contains two deadenylase subunits, CNOT6 or CNOT6L, and CNOT7 or CNOT8. Interacts with CNOT1, CNOT3, CNOT7, CNOT8 and CNOT9. Interacts with TOB1. Interacts with NANOS2. Interacts with ZFP36. Interacts with ZFP36L2. Interacts with RBM46. It depends on Mg(2+) as a cofactor. As to expression, highly expressed in placenta, skeletal muscle, pancreas, testis and leukocytes. Weakly expressed in heart, spleen and thymus.

The protein resides in the cytoplasm. It is found in the nucleus. It catalyses the reaction Exonucleolytic cleavage of poly(A) to 5'-AMP.. Inhibited by free AMP, and with lesser efficiency also by CMP, GMP, UMP, ATP and neomycin. Its function is as follows. Has 3'-5' poly(A) exoribonuclease activity for synthetic poly(A) RNA substrate. Catalytic component of the CCR4-NOT complex which is one of the major cellular mRNA deadenylases and is linked to various cellular processes including bulk mRNA degradation, miRNA-mediated repression, translational repression during translational initiation and general transcription regulation. Additional complex functions may be a consequence of its influence on mRNA expression. May be involved in the deadenylation-dependent degradation of mRNAs through the 3'-UTR AU-rich element-mediated mechanism. Involved in deadenylation-dependent degradation of CDKN1B mRNA. Its mRNA deadenylase activity can be inhibited by TOB1. Mediates cell proliferation and cell survival and prevents cellular senescence. The protein is CCR4-NOT transcription complex subunit 6-like (CNOT6L) of Homo sapiens (Human).